The sequence spans 225 residues: MKIVVPVMPQNIEEANQLDLTRIDSTDIIEWRADYLVKDDILTVAPAIFEKFSGHEVIFTLRTEKEGGNISLSNEDYLAIIRDIAALYQPDYIDFEYFSYRDVLEEMYDFSNLILSYHNFEETPENLMEVFSELTALAPRVVKIAVMPKNEQDVLDLMNYTRGFKTLNPNQEYVTMSMSKLGRISRLAADLIGSSWTFASLEQESAPGQISLADMRKIKEVLDAN.

Residues 30–32 (EWR) and Arg62 contribute to the 3-dehydroquinate site. His118 serves as the catalytic Proton donor/acceptor. Residue Lys143 is the Schiff-base intermediate with substrate of the active site. 3-dehydroquinate contacts are provided by Arg186, Ser205, and Gln209.

Belongs to the type-I 3-dehydroquinase family. In terms of assembly, homodimer.

It carries out the reaction 3-dehydroquinate = 3-dehydroshikimate + H2O. The protein operates within metabolic intermediate biosynthesis; chorismate biosynthesis; chorismate from D-erythrose 4-phosphate and phosphoenolpyruvate: step 3/7. Involved in the third step of the chorismate pathway, which leads to the biosynthesis of aromatic amino acids. Catalyzes the cis-dehydration of 3-dehydroquinate (DHQ) and introduces the first double bond of the aromatic ring to yield 3-dehydroshikimate. The sequence is that of 3-dehydroquinate dehydratase from Streptococcus mutans serotype c (strain ATCC 700610 / UA159).